Consider the following 536-residue polypeptide: Glutamyl-tRNA(Gln) amidotransferase subunit B, mitochondrial (536 aa).

This sequence belongs to the GatB/GatE family. GatB subfamily. In terms of assembly, subunit of the heterotrimeric GatFAB amidotransferase (AdT) complex, composed of A, B and F subunits.

The protein resides in the mitochondrion. It carries out the reaction L-glutamyl-tRNA(Gln) + L-glutamine + ATP + H2O = L-glutaminyl-tRNA(Gln) + L-glutamate + ADP + phosphate + H(+). Allows the formation of correctly charged Gln-tRNA(Gln) through the transamidation of misacylated Glu-tRNA(Gln) in the mitochondria. The reaction takes place in the presence of glutamine and ATP through an activated gamma-phospho-Glu-tRNA(Gln). The polypeptide is Glutamyl-tRNA(Gln) amidotransferase subunit B, mitochondrial (Vanderwaltozyma polyspora (strain ATCC 22028 / DSM 70294 / BCRC 21397 / CBS 2163 / NBRC 10782 / NRRL Y-8283 / UCD 57-17) (Kluyveromyces polysporus)).